Consider the following 467-residue polypeptide: E3 ubiquitin-protein ligase IE61 (467 aa).

The RING-type zinc finger occupies 19–58 (CTICMSTVSDLGKTMPCLHDFCFVCIRAWTSTSVQCPLCR). Disordered stretches follow at residues 101-171 (GDVI…GVTK), 205-238 (QQPRTGGQDYRDRPVSVGINQDPRTMDRLPFRAT), 344-364 (IVRPETTSTGETSRGDERDTR), and 413-467 (DSAC…MKKS). Positions 116–143 (ESIQQPTSRSSREPIQSPNPGPLQSSAR) are enriched in polar residues. The segment covering 149–161 (SPSDSQQDSIQPP) has biased composition (low complexity). Polar residues predominate over residues 162–171 (TRDSSPGVTK). Basic and acidic residues predominate over residues 228 to 238 (RTMDRLPFRAT). 2 stretches are compositionally biased toward low complexity: residues 429-443 (GESNTPSTSGSTSGS) and 450-459 (KSSAGKAGKG).

As to quaternary structure, interacts with host BTRC; this interaction seems to inactivate SCF-mediated protein degradation in general. In terms of processing, auto-ubiquitinated.

The catalysed reaction is S-ubiquitinyl-[E2 ubiquitin-conjugating enzyme]-L-cysteine + [acceptor protein]-L-lysine = [E2 ubiquitin-conjugating enzyme]-L-cysteine + N(6)-ubiquitinyl-[acceptor protein]-L-lysine.. Functionally, RING-finger E3 ubiquitin ligase that degrades host SP100, one of the major components of ND10 nuclear bodies, thereby disrupting the organization of these bodies. Also plays a role in the inhibition of host NF-kappa-B pathway by blocking the SCF(BTRC)-mediated addition of ubiquitin chains to host I-kappa-B-alpha/NFKBIA, thereby interfering with its degradation. The chain is E3 ubiquitin-protein ligase IE61 (61) from Varicella-zoster virus (strain Dumas) (HHV-3).